The primary structure comprises 144 residues: uncharacterized protein (144 aa).

The HIT domain occupies 13 to 120 (IFCGIVEGNV…VPKYETGLGF (108 aa)). Positions 105–109 (HYHMH) match the Histidine triad motif motif.

This is an uncharacterized protein from Mycoplasma pneumoniae (strain ATCC 29342 / M129 / Subtype 1) (Mycoplasmoides pneumoniae).